Consider the following 253-residue polypeptide: Tetraspanin-11 (253 aa).

3 helical membrane passes run 19–39, 63–83, and 93–113; these read LLFV…AVGI, ILIF…GAIL, and YFCL…LAHV. A glycan (N-linked (GlcNAc...) asparagine) is linked at Asn-127. A helical transmembrane segment spans residues 220–240; sequence LLLMGAVGIGVACLQICGMVL.

It belongs to the tetraspanin (TM4SF) family.

It is found in the membrane. This Homo sapiens (Human) protein is Tetraspanin-11 (TSPAN11).